The primary structure comprises 208 residues: Ribosomal RNA large subunit methyltransferase E (208 aa).

S-adenosyl-L-methionine contacts are provided by G63, W65, D83, D99, and D124. K164 serves as the catalytic Proton acceptor.

It belongs to the class I-like SAM-binding methyltransferase superfamily. RNA methyltransferase RlmE family.

The protein localises to the cytoplasm. The catalysed reaction is uridine(2552) in 23S rRNA + S-adenosyl-L-methionine = 2'-O-methyluridine(2552) in 23S rRNA + S-adenosyl-L-homocysteine + H(+). Functionally, specifically methylates the uridine in position 2552 of 23S rRNA at the 2'-O position of the ribose in the fully assembled 50S ribosomal subunit. This Alcanivorax borkumensis (strain ATCC 700651 / DSM 11573 / NCIMB 13689 / SK2) protein is Ribosomal RNA large subunit methyltransferase E.